Here is a 98-residue protein sequence, read N- to C-terminus: NADH-ubiquinone oxidoreductase chain 4L (98 aa).

3 helical membrane-spanning segments follow: residues 1-21, 29-49, and 61-81; these read MSITTLNIMVAFTMALLGMFT, SLLCLEGMMLSLFMLATIVSL, and VILLVFAACEAAVGLALLVMV.

Belongs to the complex I subunit 4L family. In terms of assembly, core subunit of respiratory chain NADH dehydrogenase (Complex I) which is composed of 45 different subunits.

It localises to the mitochondrion inner membrane. It catalyses the reaction a ubiquinone + NADH + 5 H(+)(in) = a ubiquinol + NAD(+) + 4 H(+)(out). Functionally, core subunit of the mitochondrial membrane respiratory chain NADH dehydrogenase (Complex I) which catalyzes electron transfer from NADH through the respiratory chain, using ubiquinone as an electron acceptor. Part of the enzyme membrane arm which is embedded in the lipid bilayer and involved in proton translocation. The chain is NADH-ubiquinone oxidoreductase chain 4L (MT-ND4L) from Ochotona collaris (Collared pika).